Reading from the N-terminus, the 214-residue chain is Large ribosomal subunit protein bL25 (214 aa).

2 disordered regions span residues 1–23 and 182–214; these read MSNEFLLNAESRSDTGKGASRRL and DHDQPVAAVHQPKVRASSDDDDAAEGEEAASEE. Residues 200–214 are compositionally biased toward acidic residues; it reads DDDDAAEGEEAASEE.

This sequence belongs to the bacterial ribosomal protein bL25 family. CTC subfamily. As to quaternary structure, part of the 50S ribosomal subunit; part of the 5S rRNA/L5/L18/L25 subcomplex. Contacts the 5S rRNA. Binds to the 5S rRNA independently of L5 and L18.

Its function is as follows. This is one of the proteins that binds to the 5S RNA in the ribosome where it forms part of the central protuberance. The chain is Large ribosomal subunit protein bL25 from Alcanivorax borkumensis (strain ATCC 700651 / DSM 11573 / NCIMB 13689 / SK2).